We begin with the raw amino-acid sequence, 249 residues long: Adapter protein MecA (249 aa).

Belongs to the MecA family. As to quaternary structure, homodimer.

In terms of biological role, enables the recognition and targeting of unfolded and aggregated proteins to the ClpC protease or to other proteins involved in proteolysis. This chain is Adapter protein MecA, found in Streptococcus thermophilus (strain CNRZ 1066).